A 235-amino-acid chain; its full sequence is N,O-diacetylmuramidase (235 aa).

The N-terminal stretch at 1–17 is a signal peptide; the sequence is MKLSLLTVAAAAGAAVA. In terms of domain architecture, Ch-type lysozyme spans 29–235; it reads SVQGFDISGY…DQLQRFAKGG (207 aa). Active-site residues include Asp34, Asp122, and Glu124. A disulfide bridge links Cys132 with Cys171.

It belongs to the glycosyl hydrolase 25 family.

Its subcellular location is the secreted. It carries out the reaction Hydrolysis of (1-&gt;4)-beta-linkages between N-acetylmuramic acid and N-acetyl-D-glucosamine residues in a peptidoglycan and between N-acetyl-D-glucosamine residues in chitodextrins.. Its function is as follows. This enzyme has both lysozyme (acetylmuramidase) and diacetylmuramidase activities. The chain is N,O-diacetylmuramidase from Arthroderma benhamiae (strain ATCC MYA-4681 / CBS 112371) (Trichophyton mentagrophytes).